Here is a 489-residue protein sequence, read N- to C-terminus: NSGALLWPLIWGLLLIGTQALDKEAQLRDKVFENYNINVRPARTPDQRVVVQVGMTLAHVISVSEKDEELKTKVYLEMAWNDQRLSWDPKQYGGIESLRISSSQVWTPDIVLMNNNDGNFNFALQVDVLVSPNGNVTWHPPGLYVSSCSIEVQYYPFDWQNCSMVFRSYTYGADEVTLVHPKDANGKEVTQAVIFPNTFEENGQWVIRHRSSRKNSSPNDPLYEDITFYLVIQRKPLFYIVNVIVPCILITILAIFVFYLPPDAGEKMTLSIFALLTLTVFLLLLADKVPETSLGVPIIVNYLIFTMTLVTFSVIFSVVVLNLHHRSPNTHHMPQWVKQIFIHYLPKYLCIRRPKPETPLPVAPPPRQVTSTRHADEYFIRRPENDFFLPKQERYHADPFSRDMKWFLEGPSLGLVLPRDLQSAVTAIRYLAQQLQEQEDYDTLKEDWQYVAMVVDRLFLWTFIAFTSLGTLSIFLDANFNLPPDTPFP.

Residues 1-20 (NSGALLWPLIWGLLLIGTQA) form the signal peptide. Residues 21–235 (LDKEAQLRDK…ITFYLVIQRK (215 aa)) are Extracellular-facing. N-linked (GlcNAc...) asparagine glycosylation is found at asparagine 135 and asparagine 161. Cysteine 148 and cysteine 162 form a disulfide bridge. 3 helical membrane passes run 236-260 (PLFYIVNVIVPCILITILAIFVFYL), 268-286 (MTLSIFALLTLTVFLLLLA), and 302-323 (YLIFTMTLVTFSVIFSVVVLNL). Over 324-457 (HHRSPNTHHM…WQYVAMVVDR (134 aa)) the chain is Cytoplasmic. A helical membrane pass occupies residues 458–476 (LFLWTFIAFTSLGTLSIFL).

The protein belongs to the ligand-gated ion channel (TC 1.A.9) family. Acetylcholine receptor (TC 1.A.9.1) subfamily. Beta-1/CHRNB1 sub-subfamily. As to quaternary structure, pentamer of two alpha chains, and one each of the beta, delta, and gamma (in immature muscle) or epsilon (in mature muscle) chains.

It is found in the postsynaptic cell membrane. The protein resides in the cell membrane. The catalysed reaction is K(+)(in) = K(+)(out). It carries out the reaction Na(+)(in) = Na(+)(out). After binding acetylcholine, the AChR responds by an extensive change in conformation that affects all subunits and leads to opening of an ion-conducting channel across the plasma membrane. This chain is Acetylcholine receptor subunit beta (chrnb1), found in Xenopus laevis (African clawed frog).